The sequence spans 179 residues: Cell division protein SepF (179 aa).

Residues 18–57 (EDSTVPYEKGNEPVFTPVNSSQEPDLPMNQPSQSAGAKDS) form a disordered region. Residues 34–57 (PVNSSQEPDLPMNQPSQSAGAKDS) are compositionally biased toward polar residues.

Belongs to the SepF family. In terms of assembly, homodimer. Interacts with FtsZ.

It localises to the cytoplasm. Functionally, cell division protein that is part of the divisome complex and is recruited early to the Z-ring. Probably stimulates Z-ring formation, perhaps through the cross-linking of FtsZ protofilaments. Its function overlaps with FtsA. The sequence is that of Cell division protein SepF from Streptococcus pneumoniae (strain Hungary19A-6).